Consider the following 217-residue polypeptide: Protein-L-isoaspartate O-methyltransferase (217 aa).

Ser65 is an active-site residue.

The protein belongs to the methyltransferase superfamily. L-isoaspartyl/D-aspartyl protein methyltransferase family.

It localises to the cytoplasm. It carries out the reaction [protein]-L-isoaspartate + S-adenosyl-L-methionine = [protein]-L-isoaspartate alpha-methyl ester + S-adenosyl-L-homocysteine. Catalyzes the methyl esterification of L-isoaspartyl residues in peptides and proteins that result from spontaneous decomposition of normal L-aspartyl and L-asparaginyl residues. It plays a role in the repair and/or degradation of damaged proteins. The protein is Protein-L-isoaspartate O-methyltransferase of Methanoregula boonei (strain DSM 21154 / JCM 14090 / 6A8).